A 446-amino-acid polypeptide reads, in one-letter code: Enolase (446 aa).

Positions 164 and 173 each coordinate substrate. Glutamate 216 (proton donor) is an active-site residue. 3 residues coordinate Mg(2+): aspartate 251, glutamate 302, and aspartate 329. Residues glutamate 302 and aspartate 329 each contribute to the substrate site. Lysine 354 (proton acceptor) is an active-site residue. Substrate-binding positions include 381–384 (SHRS) and lysine 405.

This sequence belongs to the enolase family. Homodimer. Requires Mg(2+) as cofactor.

Its subcellular location is the cytoplasm. The enzyme catalyses (2R)-2-phosphoglycerate = phosphoenolpyruvate + H2O. The protein operates within carbohydrate degradation; glycolysis; pyruvate from D-glyceraldehyde 3-phosphate: step 4/5. This is Enolase (ENO1) from Oryza sativa subsp. japonica (Rice).